Here is a 535-residue protein sequence, read N- to C-terminus: Probable inorganic phosphate transporter 1-7 (535 aa).

The Cytoplasmic segment spans residues 1–24 (MAGDQLNVLNALDVAKTQWYHFTA). A helical transmembrane segment spans residues 25–45 (IIIAGMGFFTDAYDLFCISLV). Over 46-70 (TKLLGRIYYHVDGSEKPGTLPPNVS) the chain is Extracellular. Residues 71–91 (AAVNGVAFCGTLAGQLFFGWL) form a helical membrane-spanning segment. The Cytoplasmic segment spans residues 92 to 99 (GDKLGRKK). The helical transmembrane segment at 100–120 (VYGMTLMVMVLCSIASGLSFG) threads the bilayer. Residues 121–131 (SNPKTVMTTLC) lie on the Extracellular side of the membrane. The helical transmembrane segment at 132-152 (FFRFWLGFGIGGDYPLSATIM) threads the bilayer. The Cytoplasmic segment spans residues 153–161 (SEYANKKTR). A helical transmembrane segment spans residues 162-182 (GAFIAAVFAMQGFGILTGGIF). The Extracellular segment spans residues 183–211 (AIIVSAAFEAKFPAPTYQIDALASTVPQA). A helical transmembrane segment spans residues 212-232 (DYVWRIILMVGALPAAMTYYS). Topologically, residues 233–289 (RSKMPETARYTALVAKDAKLAASNMSKVLQVEIEAEQQGTEDKSNSFGLFSKEFMKR) are cytoplasmic. Residues 290-310 (HGLHLLGTTSTWFLLDIAFYS) form a helical membrane-spanning segment. The Extracellular segment spans residues 311 to 345 (QNLFQKDIFSAIGWIPPAQTMNAIQEVFKIARAQT). The chain crosses the membrane as a helical span at residues 346-366 (LIALCSTVPGYWFTVAFIDVI). Topologically, residues 367-368 (GR) are cytoplasmic. The helical transmembrane segment at 369–389 (FAIQMMGFFFMTVFMFALAIP) threads the bilayer. At 390 to 399 (YDHWTHKENR) the chain is on the extracellular side. The helical transmembrane segment at 400 to 420 (IGFVAMYSLTFFFANFGPNAT) threads the bilayer. Over 421-438 (TFVVPAEIFPARFRSTCH) the chain is Cytoplasmic. Residues 439–459 (GISAASGKLGAMVGAFGFLYL) traverse the membrane as a helical segment. At 460-480 (AQSPDKTKTEHGYPPGIGVKN) the chain is on the extracellular side. The helical transmembrane segment at 481–501 (SLIVLGVVNLLGMVFTLLVPE) threads the bilayer. Residues 502–535 (SKGKSLEEMSGENEQNDESSSSSNNNSNNAVSTA) are Cytoplasmic-facing. Residues 506 to 535 (SLEEMSGENEQNDESSSSSNNNSNNAVSTA) are disordered. Low complexity predominate over residues 519–535 (ESSSSSNNNSNNAVSTA). Position 520 is a phosphoserine (Ser520).

It belongs to the major facilitator superfamily. Phosphate:H(+) symporter (TC 2.A.1.9) family. In terms of tissue distribution, mature pollen.

The protein resides in the membrane. Functionally, high-affinity transporter for external inorganic phosphate. The sequence is that of Probable inorganic phosphate transporter 1-7 (PHT1-7) from Arabidopsis thaliana (Mouse-ear cress).